The chain runs to 482 residues: Adenylosuccinate lyase (482 aa).

Residues 14 to 15 (RY), 82 to 84 (RHD), and 108 to 109 (TS) contribute to the substrate site. Catalysis depends on H156, which acts as the Proton donor/acceptor. Q238 is a binding site for substrate. Catalysis depends on S286, which acts as the Proton donor/acceptor. Positions 300, 326, 331, and 335 each coordinate substrate.

It belongs to the lyase 1 family. Adenylosuccinate lyase subfamily. As to quaternary structure, homotetramer. Residues from neighboring subunits contribute catalytic and substrate-binding residues to each active site.

It carries out the reaction N(6)-(1,2-dicarboxyethyl)-AMP = fumarate + AMP. The enzyme catalyses (2S)-2-[5-amino-1-(5-phospho-beta-D-ribosyl)imidazole-4-carboxamido]succinate = 5-amino-1-(5-phospho-beta-D-ribosyl)imidazole-4-carboxamide + fumarate. The protein operates within purine metabolism; AMP biosynthesis via de novo pathway; AMP from IMP: step 2/2. It participates in purine metabolism; IMP biosynthesis via de novo pathway; 5-amino-1-(5-phospho-D-ribosyl)imidazole-4-carboxamide from 5-amino-1-(5-phospho-D-ribosyl)imidazole-4-carboxylate: step 2/2. The polypeptide is Adenylosuccinate lyase (ade8) (Schizosaccharomyces pombe (strain 972 / ATCC 24843) (Fission yeast)).